The primary structure comprises 1141 residues: MDKPSTKIVNDYTHFYAYSWHVDEESVDETFIRVYGLDEANENVCVSVNGFRQFVWVELPSFIDWSLSHNVDRVVRYFEQTWPNVGVQFKMYRKLYGANLKQSRSNGEYVHKKFPFLQCSSMSWKMLKFTLPTALKTPQRIMGLGSIKFRVHGQDACPRLQLTSKYNLPTAGWIQFKGIEILDQDVKFSQSCREFMVDLSDKNWGKPSTMICRSDKTTVPRPLILSFDLEVNSEEVVTMPKATKPGDVVFQISCIFNRLGGVENEVERYLLSLGNPTEQIVGATILRYSTEKKLLMGFRDLVNEKNPNVITGYNIFNFDIPYLMDRTVYKSIFVEWAQQGFAKNRPGIPREIRWSSSAYKNQEFKYLDCEGRLYIDLLPVVQRDFKLNDYKLKTVSTFFIGETKDDLDPTSIFRCYREGTRDDSPKASHFMSICGKYCMQDSMLVYKLFEKLNVWYGLSEMAVVCNVPMITLFTKGQQIKVYSQLYKYCLAAKIIPEKDGYIVAENERYVGAHVFTPKPGLYENVIPLDFSSLYPSLMIAYNIDYSTCAFDASIPDQLCHIMEWEDHIGCAHDPKVVEKERLTQLINTLKNKEEVSRMRKERSEITKSLSKNVMCEKRKYRFLKSTTEDGRFKGVLPTIVQNMLDARKETRAEMGRLKKRLGTAVGEEATHLQTQIAILNQRQLAYKVSANSMYGITGVKAGMLPFMPVAMSITFMGRTNIARVAQLLQTQYQGELVYGDTDSNYVSFNHKNMSMSELWDYAIRVADEISQQFPPPIKLEFEEAIYSKFLILTKKRYLYQTALRDGTIKKEIGKRGVVLNRRDNSGFIRKIYQNMVDSIFNHVAGEGRDLKSVVLDVVTADICALFNHQFPVDDFVITKSTGNYGDLQPENFVNEKGVPRAMLGQYNVPCLTSQVREEERIETEEQEQNWYLDKLPAHIQLLEKIRRRGQMKNEGGRLEYVIVETNSLKDKQSTKIETLPYYTKNRGILKLDYLYYLHRCINPLDQILKVVFDLDDFVKRQYKAREAKKKVTLELGELFRPNFIIEKSQLQLVRARADEVYRLVYGTAADCRAQLGELGPDWCVRAKFEYVPLVDDPYRYFQQKYGATGSLKTKFDFEGRDIRLNNQPESKLVSTLKREFK.

It belongs to the DNA polymerase type-B family.

The catalysed reaction is DNA(n) + a 2'-deoxyribonucleoside 5'-triphosphate = DNA(n+1) + diphosphate. Functionally, DNA-directed DNA polymerase involved in viral DNA replication. In Invertebrate iridescent virus 3 (IIV-3), this protein is DNA polymerase 120R.